The primary structure comprises 325 residues: 5-dehydro-2-deoxygluconokinase (325 aa).

It belongs to the carbohydrate kinase PfkB family.

The enzyme catalyses 5-dehydro-2-deoxy-D-gluconate + ATP = 6-phospho-5-dehydro-2-deoxy-D-gluconate + ADP + H(+). Its pathway is polyol metabolism; myo-inositol degradation into acetyl-CoA; acetyl-CoA from myo-inositol: step 5/7. Its function is as follows. Catalyzes the phosphorylation of 5-dehydro-2-deoxy-D-gluconate (2-deoxy-5-keto-D-gluconate or DKG) to 6-phospho-5-dehydro-2-deoxy-D-gluconate (DKGP). The sequence is that of 5-dehydro-2-deoxygluconokinase from Listeria innocua serovar 6a (strain ATCC BAA-680 / CLIP 11262).